Here is a 247-residue protein sequence, read N- to C-terminus: Probable transcriptional regulatory protein YebC (247 aa).

Positions 1-20 (MAGHSKWANTRHRKAAQDAK) are disordered.

This sequence belongs to the TACO1 family.

Its subcellular location is the cytoplasm. The chain is Probable transcriptional regulatory protein YebC from Salmonella arizonae (strain ATCC BAA-731 / CDC346-86 / RSK2980).